The sequence spans 177 residues: Large ribosomal subunit protein uL6 (177 aa).

This sequence belongs to the universal ribosomal protein uL6 family. Part of the 50S ribosomal subunit.

Its function is as follows. This protein binds to the 23S rRNA, and is important in its secondary structure. It is located near the subunit interface in the base of the L7/L12 stalk, and near the tRNA binding site of the peptidyltransferase center. The sequence is that of Large ribosomal subunit protein uL6 from Tolumonas auensis (strain DSM 9187 / NBRC 110442 / TA 4).